Reading from the N-terminus, the 515-residue chain is Calcium-dependent protein kinase 2 (515 aa).

A disordered region spans residues 1–51; sequence MGNCCPGSGDAEPASSDASTGNGSSSFKAGASPSSAPAQNKPPAPIGPVLG. A lipid anchor (N-myristoyl glycine) is attached at Gly2. Over residues 14-38 the composition is skewed to low complexity; the sequence is ASSDASTGNGSSSFKAGASPSSAPA. The Protein kinase domain occupies 61–319; sequence YTIGKELGRG…AYEVLNHPWI (259 aa). ATP is bound by residues 67–75 and Lys90; that span reads LGRGQFGVT. The Proton acceptor role is filled by Asp185. Residues 325 to 355 form an autoinhibitory domain region; it reads APDTPLDNAVMNRLKQFRAMNQFKKAALRVI. EF-hand domains are found at residues 362–397, 398–433, 434–469, and 473–504; these read EEIR…QGTK, LTEA…MNRM, DREE…KGLL, and DIKD…GNPE. Asp375, Asp377, Ser379, Thr381, Glu386, Asp411, Asp413, Asn415, Thr417, Glu422, Asp447, Asp449, Ser451, Cys453, Glu458, Asp482, Asp484, Asp486, Arg488, and Glu493 together coordinate Ca(2+).

This sequence belongs to the protein kinase superfamily. Ser/Thr protein kinase family. CDPK subfamily. As to expression, expressed in heading panicles, spikelets and mature pollen grains.

The protein localises to the membrane. It carries out the reaction L-seryl-[protein] + ATP = O-phospho-L-seryl-[protein] + ADP + H(+). The catalysed reaction is L-threonyl-[protein] + ATP = O-phospho-L-threonyl-[protein] + ADP + H(+). Activated by calcium. Autophosphorylation may play an important role in the regulation of the kinase activity. Functionally, may play a role in signal transduction pathways that involve calcium as a second messenger. This is Calcium-dependent protein kinase 2 from Oryza sativa subsp. japonica (Rice).